A 377-amino-acid polypeptide reads, in one-letter code: DNA-directed RNA polymerase subunit alpha (377 aa).

Positions 1–259 (MSDSSHNLLY…KHFSVFEKMD (259 aa)) are alpha N-terminal domain (alpha-NTD). The tract at residues 276 to 377 (KDDILHKLVL…KIRSSKNTKG (102 aa)) is alpha C-terminal domain (alpha-CTD).

The protein belongs to the RNA polymerase alpha chain family. Homodimer. The RNAP catalytic core consists of 2 alpha, 1 beta, 1 beta' and 1 omega subunit. When a sigma factor is associated with the core the holoenzyme is formed, which can initiate transcription.

It catalyses the reaction RNA(n) + a ribonucleoside 5'-triphosphate = RNA(n+1) + diphosphate. Its function is as follows. DNA-dependent RNA polymerase catalyzes the transcription of DNA into RNA using the four ribonucleoside triphosphates as substrates. The sequence is that of DNA-directed RNA polymerase subunit alpha from Chlamydia trachomatis serovar D (strain ATCC VR-885 / DSM 19411 / UW-3/Cx).